The chain runs to 306 residues: UDP-N-acetylenolpyruvoylglucosamine reductase (306 aa).

The FAD-binding PCMH-type domain occupies 34 to 198 (VGGPADLLIT…LEVTFKLHNS (165 aa)). The active site involves arginine 177. Residue serine 227 is the Proton donor of the active site. Glutamate 297 is a catalytic residue.

The protein belongs to the MurB family. FAD is required as a cofactor.

Its subcellular location is the cytoplasm. It catalyses the reaction UDP-N-acetyl-alpha-D-muramate + NADP(+) = UDP-N-acetyl-3-O-(1-carboxyvinyl)-alpha-D-glucosamine + NADPH + H(+). It functions in the pathway cell wall biogenesis; peptidoglycan biosynthesis. Cell wall formation. This Clostridium botulinum (strain Okra / Type B1) protein is UDP-N-acetylenolpyruvoylglucosamine reductase.